A 291-amino-acid chain; its full sequence is MPKTSYLNKNFESAHYNNVRPSYPLSLVNEIMKFHKGTRKSLVDIGCGTGKATFVVEPYFKEVIGIDPSSAMLSIAEKETNERRLDKKIRFINAPGEDLSSIRPESVDMVISAEAIHWCNLERLFQQVSSILRSDGTFAFWFYIQPEFVDFPEALNVYYKYGWSKDYMGKYLNDNQREILLNYGGEKLRSLLSDRFGDIEVTIYSPSDPNASTVTAENSQFLWRAAITLNQFKEFVKSWSIYTSWARDNPSKPDIADIFINELKEICHCEDLNVPLKIEWSTFYYLCRKRE.

It belongs to the methyltransferase superfamily.

Its subcellular location is the cytoplasm. Probable S-adenosylmethionine-dependent methyltransferase which mediates cantharidin resistance. The protein is Probable S-adenosylmethionine-dependent methyltransferase CRG1 (CRG1) of Saccharomyces cerevisiae (strain ATCC 204508 / S288c) (Baker's yeast).